We begin with the raw amino-acid sequence, 326 residues long: ATP synthase gamma chain (326 aa).

The protein belongs to the ATPase gamma chain family. As to quaternary structure, F-type ATPases have 2 components, CF(1) - the catalytic core - and CF(0) - the membrane proton channel. CF(1) has five subunits: alpha(3), beta(3), gamma(1), delta(1), epsilon(1). CF(0) has three main subunits: a, b and c.

The protein resides in the cell membrane. Produces ATP from ADP in the presence of a proton gradient across the membrane. The gamma chain is believed to be important in regulating ATPase activity and the flow of protons through the CF(0) complex. This is ATP synthase gamma chain from Corynebacterium efficiens (strain DSM 44549 / YS-314 / AJ 12310 / JCM 11189 / NBRC 100395).